A 72-amino-acid chain; its full sequence is SRY-related protein ADW5 (72 aa).

A DNA-binding region (HMG box) is located at residues 1-69 (VKRPMNAFMV…KHMADYPDYK (69 aa)).

It localises to the nucleus. The protein is SRY-related protein ADW5 of Alligator mississippiensis (American alligator).